A 615-amino-acid chain; its full sequence is Translation initiation factor IF-2 (615 aa).

Residues 118-285 (KRPPIVTVMG…AILTLAEINE (168 aa)) enclose the tr-type G domain. Residues 127 to 134 (GHVDHGKT) form a G1 region. Residue 127 to 134 (GHVDHGKT) participates in GTP binding. Positions 152-156 (GITQH) are G2. A G3 region spans residues 173-176 (DTPG). GTP-binding positions include 173 to 177 (DTPGH) and 227 to 230 (NKMD). Residues 227-230 (NKMD) are G4. A G5 region spans residues 263-265 (SAI).

This sequence belongs to the TRAFAC class translation factor GTPase superfamily. Classic translation factor GTPase family. IF-2 subfamily.

It localises to the cytoplasm. One of the essential components for the initiation of protein synthesis. Protects formylmethionyl-tRNA from spontaneous hydrolysis and promotes its binding to the 30S ribosomal subunits. Also involved in the hydrolysis of GTP during the formation of the 70S ribosomal complex. The chain is Translation initiation factor IF-2 from Mycoplasmoides gallisepticum (strain R(low / passage 15 / clone 2)) (Mycoplasma gallisepticum).